The following is a 146-amino-acid chain: D-aminoacyl-tRNA deacylase (146 aa).

The Gly-cisPro motif, important for rejection of L-amino acids signature appears at 138–139 (GP).

Belongs to the DTD family. As to quaternary structure, homodimer.

It is found in the cytoplasm. The catalysed reaction is glycyl-tRNA(Ala) + H2O = tRNA(Ala) + glycine + H(+). It carries out the reaction a D-aminoacyl-tRNA + H2O = a tRNA + a D-alpha-amino acid + H(+). Its function is as follows. An aminoacyl-tRNA editing enzyme that deacylates mischarged D-aminoacyl-tRNAs. Also deacylates mischarged glycyl-tRNA(Ala), protecting cells against glycine mischarging by AlaRS. Acts via tRNA-based rather than protein-based catalysis; rejects L-amino acids rather than detecting D-amino acids in the active site. By recycling D-aminoacyl-tRNA to D-amino acids and free tRNA molecules, this enzyme counteracts the toxicity associated with the formation of D-aminoacyl-tRNA entities in vivo and helps enforce protein L-homochirality. This Xanthomonas euvesicatoria pv. vesicatoria (strain 85-10) (Xanthomonas campestris pv. vesicatoria) protein is D-aminoacyl-tRNA deacylase.